We begin with the raw amino-acid sequence, 101 residues long: Large ribosomal subunit protein uL23 (101 aa).

This sequence belongs to the universal ribosomal protein uL23 family. Part of the 50S ribosomal subunit. Contacts protein L29, and trigger factor when it is bound to the ribosome.

Functionally, one of the early assembly proteins it binds 23S rRNA. One of the proteins that surrounds the polypeptide exit tunnel on the outside of the ribosome. Forms the main docking site for trigger factor binding to the ribosome. This is Large ribosomal subunit protein uL23 from Tolumonas auensis (strain DSM 9187 / NBRC 110442 / TA 4).